The following is a 389-amino-acid chain: Phospho-N-acetylmuramoyl-pentapeptide-transferase (389 aa).

The next 10 helical transmembrane spans lie at 25–45, 73–93, 97–117, 135–155, 190–210, 222–242, 258–278, 286–306, 311–331, and 366–386; these read RAVM…PWVI, TMGG…WGDL, FIWI…VDDY, FWQS…VSEA, ISYP…IVGA, GLVI…AYVM, GAGE…AFLW, VFMG…VAVI, IVLF…MLQV, and QVVV…LTTL.

It belongs to the glycosyltransferase 4 family. MraY subfamily. Mg(2+) serves as cofactor.

It is found in the cell inner membrane. The enzyme catalyses UDP-N-acetyl-alpha-D-muramoyl-L-alanyl-gamma-D-glutamyl-meso-2,6-diaminopimeloyl-D-alanyl-D-alanine + di-trans,octa-cis-undecaprenyl phosphate = di-trans,octa-cis-undecaprenyl diphospho-N-acetyl-alpha-D-muramoyl-L-alanyl-D-glutamyl-meso-2,6-diaminopimeloyl-D-alanyl-D-alanine + UMP. Its pathway is cell wall biogenesis; peptidoglycan biosynthesis. Functionally, catalyzes the initial step of the lipid cycle reactions in the biosynthesis of the cell wall peptidoglycan: transfers peptidoglycan precursor phospho-MurNAc-pentapeptide from UDP-MurNAc-pentapeptide onto the lipid carrier undecaprenyl phosphate, yielding undecaprenyl-pyrophosphoryl-MurNAc-pentapeptide, known as lipid I. The sequence is that of Phospho-N-acetylmuramoyl-pentapeptide-transferase from Burkholderia cenocepacia (strain HI2424).